A 424-amino-acid polypeptide reads, in one-letter code: Homeobox even-skipped homolog protein 2 (424 aa).

Disordered regions lie at residues 18–65 and 132–178; these read PAGK…DTPT and TTQL…GPDQ. Composition is skewed to polar residues over residues 50–65 and 132–145; these read RPTSASLHNTVGDTPT and TTQLKENTNKVYSD. The span at 146–175 shows a compositional bias: low complexity; that stretch reads NGSSTNTSSNGSNITNLNGNSSSIGNSGSG. Residues 179–238 constitute a DNA-binding region (homeobox); it reads VRRYRTAFTREQIGRLEKEFYRENYVSRPRRCELAAALNLPETTIKVWFQNRRMKDKRQR.

This sequence belongs to the even-skipped homeobox family.

It is found in the nucleus. The sequence is that of Homeobox even-skipped homolog protein 2 (EVX2) from Heterodontus francisci (Horn shark).